We begin with the raw amino-acid sequence, 211 residues long: SsrA-binding protein (211 aa).

The segment at 168-211 (KHRLRRPRAQRNTQRSVTPRRTRENKNVRGSKARSARRNVRREN) is disordered. The segment covering 177 to 186 (QRNTQRSVTP) has biased composition (polar residues). Positions 196–211 (RGSKARSARRNVRREN) are enriched in basic residues.

Belongs to the SmpB family.

The protein resides in the cytoplasm. Its function is as follows. Required for rescue of stalled ribosomes mediated by trans-translation. Binds to transfer-messenger RNA (tmRNA), required for stable association of tmRNA with ribosomes. tmRNA and SmpB together mimic tRNA shape, replacing the anticodon stem-loop with SmpB. tmRNA is encoded by the ssrA gene; the 2 termini fold to resemble tRNA(Ala) and it encodes a 'tag peptide', a short internal open reading frame. During trans-translation Ala-aminoacylated tmRNA acts like a tRNA, entering the A-site of stalled ribosomes, displacing the stalled mRNA. The ribosome then switches to translate the ORF on the tmRNA; the nascent peptide is terminated with the 'tag peptide' encoded by the tmRNA and targeted for degradation. The ribosome is freed to recommence translation, which seems to be the essential function of trans-translation. The chain is SsrA-binding protein from Tropheryma whipplei (strain Twist) (Whipple's bacillus).